The chain runs to 394 residues: GDSL esterase/lipase At1g31550 (394 aa).

A signal peptide spans 1–27; it reads MASLDSHVLMKLGSLFLSTLFVSIVSS. Catalysis depends on Ser-43, which acts as the Nucleophile. 3 N-linked (GlcNAc...) asparagine glycosylation sites follow: Asn-138, Asn-290, and Asn-322. Catalysis depends on residues Asp-345 and His-348.

It belongs to the 'GDSL' lipolytic enzyme family.

Its subcellular location is the secreted. The sequence is that of GDSL esterase/lipase At1g31550 from Arabidopsis thaliana (Mouse-ear cress).